Reading from the N-terminus, the 635-residue chain is Threonine--tRNA ligase (635 aa).

The editing domain stretch occupies residues 1–152; that stretch reads MQLLLIHSDY…AKAAVKPEAA (152 aa). Residues 215 to 514 form a catalytic region; it reads PHVELMRRLE…TEEGKVPMLP (300 aa). The Zn(2+) site is built by Cys-307, His-359, and His-483.

This sequence belongs to the class-II aminoacyl-tRNA synthetase family. Homodimer. It depends on Zn(2+) as a cofactor.

It is found in the cytoplasm. It catalyses the reaction tRNA(Thr) + L-threonine + ATP = L-threonyl-tRNA(Thr) + AMP + diphosphate + H(+). Functionally, catalyzes the attachment of threonine to tRNA(Thr) in a two-step reaction: L-threonine is first activated by ATP to form Thr-AMP and then transferred to the acceptor end of tRNA(Thr). Also edits incorrectly charged L-seryl-tRNA(Thr). The sequence is that of Threonine--tRNA ligase from Methanosarcina acetivorans (strain ATCC 35395 / DSM 2834 / JCM 12185 / C2A).